We begin with the raw amino-acid sequence, 271 residues long: Probable WRKY transcription factor 69 (271 aa).

Disordered stretches follow at residues methionine 1–lysine 47 and proline 130–alanine 166. Positions glutamate 9 to tyrosine 18 are enriched in acidic residues. Positions glycine 64–proline 130 form a DNA-binding region, WRKY.

Belongs to the WRKY group II-e family.

The protein resides in the nucleus. Functionally, transcription factor. Interacts specifically with the W box (5'-(T)TGAC[CT]-3'), a frequently occurring elicitor-responsive cis-acting element. This Arabidopsis thaliana (Mouse-ear cress) protein is Probable WRKY transcription factor 69 (WRKY69).